A 277-amino-acid chain; its full sequence is MKTIILFVTFLALSSSSLADETETEFHYKPGEIADPSKWSSIKAEWKICGTGKRQSPINLTPKIARIVHNSTEILQTYYKPVEAILKNRGFDMKVKWEDDAGKIVINDTDYKLVQSHWHAPSEHFLDGQRLAMELHMVHKSVEGHLAVIGVLFREGEPNAFISRIMDKIHKIADVQDGEVSIGKIDPREFGWDLTKFYEYRGSLTTPPCTEDVMWTIINKVGTVSREQIDVLTDARRGGYEKNARPAQPLNGRLVYLNEQSSPSPTPRLRIPRVGPV.

The N-terminal stretch at 1–19 (MKTIILFVTFLALSSSSLA) is a signal peptide. The Alpha-carbonic anhydrase domain occupies 24 to 259 (TEFHYKPGEI…LNGRLVYLNE (236 aa)). Cys49 and Cys209 are disulfide-bonded. N-linked (GlcNAc...) asparagine glycosylation is found at Asn70 and Asn107. Residues His117, His119, and His136 each contribute to the Zn(2+) site. 205–206 (TT) contributes to the substrate binding site. Positions 257–277 (LNEQSSPSPTPRLRIPRVGPV) are disordered.

The protein belongs to the alpha-class carbonic anhydrase family. Zn(2+) serves as cofactor. N-glycosylated. As to expression, expressed in flowers and siliques.

The protein resides in the plastid. It localises to the chloroplast stroma. The catalysed reaction is hydrogencarbonate + H(+) = CO2 + H2O. Reversible hydration of carbon dioxide. The protein is Alpha carbonic anhydrase 3 (ACA3) of Arabidopsis thaliana (Mouse-ear cress).